The primary structure comprises 283 residues: Isochorismatase domain-containing protein 1 (283 aa).

It belongs to the isochorismatase family.

The polypeptide is Isochorismatase domain-containing protein 1 (isoc1) (Danio rerio (Zebrafish)).